A 512-amino-acid chain; its full sequence is MKKGGIVILDFGSQYNQLIARRVREMGVYAEVVPFHEDVDKILAREPKGIILSGGPASVYAEGAPSLDIKLFQNNIPILGLCYGMQLITHLHGGKVARADKQEFGKAELELDDKNHILYKNIPNKTTVWMSHGDHVTEMAPDFKIIAHTDSSIAAIENSDKNIYAFQYHPEVTHSQHGFDMLKNFIFGIAKAEKNWSMENYIESTVKQIKERVGNKQVILGLSGGVDSSVAAALINKAIGRQLTCIFVDTGLLRKDEAKQVMEVYAKNFDMNIKCINAEERFLTKLAGVTDPETKRKIIGKEFVEVFNEEAKKIEGAEFLAQGTIYPDVIESVSVKGPSVTIKSHHNVGGLPEDLKFELLEPLRELFKDEVRKVGRELGIPDYMVDRHPFPGPGLGIRILGEVTKEKADILREADAIFIEELRKADLYNKVSQAFVVLLPVKSVGVMGDERTYEYTAVLRSANTIDFMTATWSHLPYEFLEKVSNRILNEVKGINRLTYDISSKPPATIEWE.

One can recognise a Glutamine amidotransferase type-1 domain in the interval 5–195 (GIVILDFGSQ…IFGIAKAEKN (191 aa)). C82 serves as the catalytic Nucleophile. Residues H169 and E171 contribute to the active site. The 192-residue stretch at 196 to 387 (WSMENYIEST…LGIPDYMVDR (192 aa)) folds into the GMPS ATP-PPase domain. 223-229 (SGGVDSS) lines the ATP pocket.

In terms of assembly, homodimer.

It carries out the reaction XMP + L-glutamine + ATP + H2O = GMP + L-glutamate + AMP + diphosphate + 2 H(+). The protein operates within purine metabolism; GMP biosynthesis; GMP from XMP (L-Gln route): step 1/1. In terms of biological role, catalyzes the synthesis of GMP from XMP. The protein is GMP synthase [glutamine-hydrolyzing] of Fusobacterium nucleatum subsp. nucleatum (strain ATCC 25586 / DSM 15643 / BCRC 10681 / CIP 101130 / JCM 8532 / KCTC 2640 / LMG 13131 / VPI 4355).